We begin with the raw amino-acid sequence, 43 residues long: SPbeta prophage-derived uncharacterized protein YotD (43 aa).

The chain is SPbeta prophage-derived uncharacterized protein YotD (yotD) from Bacillus subtilis (strain 168).